The following is a 236-amino-acid chain: Ureidoacrylate amidohydrolase RutB (236 aa).

Residue aspartate 24 is the Proton acceptor of the active site. Lysine 133 is an active-site residue. The active-site Nucleophile is the cysteine 166.

The protein belongs to the isochorismatase family. RutB subfamily.

It carries out the reaction (Z)-3-ureidoacrylate + H2O + H(+) = (Z)-3-aminoacrylate + NH4(+) + CO2. The catalysed reaction is (Z)-3-ureidoacrylate + H2O = (Z)-3-aminoacrylate + carbamate + H(+). The enzyme catalyses (Z)-2-methylureidoacrylate + H2O + H(+) = (Z)-2-methylaminoacrylate + NH4(+) + CO2. In terms of biological role, hydrolyzes ureidoacrylate to form aminoacrylate and carbamate. The carbamate hydrolyzes spontaneously, thereby releasing one of the nitrogen atoms of the pyrimidine ring as ammonia and one of its carbon atoms as CO2. The polypeptide is Ureidoacrylate amidohydrolase RutB (Klebsiella pneumoniae subsp. pneumoniae (strain ATCC 700721 / MGH 78578)).